A 395-amino-acid chain; its full sequence is Protein hedgehog (395 aa).

A signal peptide spans 1-26; that stretch reads MDNHSSVPWASAASVTCLSLDAKCHS. Positions 26-43 are enriched in low complexity; the sequence is SSSSSCSSKSTASSISAS. Residues 26-46 are disordered; sequence SSSSSCSSKSTASSISASPET. Positions 27–82 are excised as a propeptide; that stretch reads SSSSCSSKSTASSISASPETQTMRHIAHTQRCLSRLTSLVALLLIVLPMMFSPAHS. The N-palmitoyl cysteine moiety is linked to residue Cys-83. Ca(2+) contacts are provided by Glu-147, Glu-148, Asp-153, Thr-183, Glu-184, Asp-187, and Asp-189. Gly-255 carries the Cholesterol glycine ester lipid modification.

It belongs to the hedgehog family. As to quaternary structure, interacts with shf. In terms of processing, the C-terminal part of the hedgehog protein precursor displays an autoproteolysis activity that results in the cleavage of the full-length protein into two parts (N-product and C-product). In addition, the C-terminal part displays a cholesterol transferase activity that results by the covalent attachment of a cholesterol moiety to the C-terminal of the newly generated N-product. The N-product is the active species in both local and long-range signaling, whereas the C-product has no signaling activity. Cholesterylation is required for N-product targeting to lipid rafts and multimerization. Post-translationally, N-palmitoylation by Rasp of the hedgehog N-product, within the secretory pathway, is required for the embryonic and larval patterning activities of the hedgehog signal.

The protein localises to the nucleus. It localises to the cytoplasm. The protein resides in the cell membrane. The catalysed reaction is glycyl-L-cysteinyl-[protein] + cholesterol + H(+) = [protein]-C-terminal glycyl cholesterol ester + N-terminal L-cysteinyl-[protein]. Its function is as follows. The C-terminal part of the hedgehog protein precursor displays an autoproteolysis activity that results in the cleavage of the full-length protein into two parts (N-product and C-product). In addition, the C-terminal part displays a cholesterol transferase activity that results by the covalent attachment of a cholesterol moiety to the C-terminal of the newly generated N-product. Once cleaved, the C-product has no signaling activity and diffuses from the cell. In terms of biological role, the dually lipidated hedgehog protein N-product is a morphogen which is essential for a variety of patterning events during development. Establishes the anterior-posterior axis of the embryonic segments and patterns the larval imaginal disks. Binds to the patched (ptc) receptor, which functions in association with smoothened (smo), to activate the transcription of target genes wingless (wg), decapentaplegic (dpp) and ptc. In the absence of hh, ptc represses the constitutive signaling activity of smo through fused (fu). Essential component of a signaling pathway which regulates the Duox-dependent gut immune response to bacterial uracil; required to activate Cad99C-dependent endosome formation, norpA-dependent Ca2+ mobilization and p38 MAPK, which are essential steps in the Duox-dependent production of reactive oxygen species (ROS) in response to intestinal bacterial infection. During photoreceptor differentiation, it up-regulates transcription of Ubr3, which in turn promotes the hh-signaling pathway by mediating the ubiquitination and degradation of cos. The protein is Protein hedgehog of Drosophila simulans (Fruit fly).